The primary structure comprises 466 residues: Cysteine--tRNA ligase (466 aa).

Cys28 is a Zn(2+) binding site. The 'HIGH' region motif lies at 30-40; it reads PTVYNYIHIGN. Positions 208, 233, and 237 each coordinate Zn(2+). The 'KMSKS' region signature appears at 265–269; the sequence is KMSKS. Residue Lys268 coordinates ATP.

The protein belongs to the class-I aminoacyl-tRNA synthetase family. As to quaternary structure, monomer. It depends on Zn(2+) as a cofactor.

It localises to the cytoplasm. The catalysed reaction is tRNA(Cys) + L-cysteine + ATP = L-cysteinyl-tRNA(Cys) + AMP + diphosphate. This chain is Cysteine--tRNA ligase, found in Staphylococcus aureus (strain MRSA252).